Reading from the N-terminus, the 245-residue chain is Carboxy-S-adenosyl-L-methionine synthase (245 aa).

Residues Y42, 67-69 (GCS), 92-93 (DN), 120-121 (DI), N135, and R202 each bind S-adenosyl-L-methionine.

This sequence belongs to the class I-like SAM-binding methyltransferase superfamily. Cx-SAM synthase family. Homodimer.

The enzyme catalyses prephenate + S-adenosyl-L-methionine = carboxy-S-adenosyl-L-methionine + 3-phenylpyruvate + H2O. In terms of biological role, catalyzes the conversion of S-adenosyl-L-methionine (SAM) to carboxy-S-adenosyl-L-methionine (Cx-SAM). The chain is Carboxy-S-adenosyl-L-methionine synthase from Vibrio vulnificus (strain CMCP6).